The sequence spans 263 residues: Type III pantothenate kinase (263 aa).

9-16 (DIGNTNVK) contributes to the ATP binding site. Substrate-binding positions include Tyr-103 and 110 to 113 (GADR). Catalysis depends on Asp-112, which acts as the Proton acceptor. Asp-134 is a binding site for K(+). Thr-137 serves as a coordination point for ATP. Thr-190 is a substrate binding site.

It belongs to the type III pantothenate kinase family. As to quaternary structure, homodimer. NH4(+) is required as a cofactor. The cofactor is K(+).

It is found in the cytoplasm. It carries out the reaction (R)-pantothenate + ATP = (R)-4'-phosphopantothenate + ADP + H(+). Its pathway is cofactor biosynthesis; coenzyme A biosynthesis; CoA from (R)-pantothenate: step 1/5. Catalyzes the phosphorylation of pantothenate (Pan), the first step in CoA biosynthesis. This is Type III pantothenate kinase from Oleidesulfovibrio alaskensis (strain ATCC BAA-1058 / DSM 17464 / G20) (Desulfovibrio alaskensis).